The primary structure comprises 187 residues: MFKFVKSSSDYTNWYFHKNSEIAFWGRSNVGKSSLLNALTSKGLAKVSKTPGRTQLINFFENELNQVYVDLPGYGYAKLSKDLKDKMMAMIEEYLLNRSNLKMLYLLIDSRLGFTKIDLEILSFLKENNLNYFIVFTKIDKLNTKEKNELNKKIKTYLEKESFNYLIVSSETKYQIDKLKENINSNF.

The region spanning 18–187 is the EngB-type G domain; that stretch reads KNSEIAFWGR…KLKENINSNF (170 aa). GTP-binding positions include 26–33, 52–56, 70–73, 137–140, and 168–170; these read GRSNVGKS, GRTQL, DLPG, TKID, and VSS. Residues Ser33 and Thr54 each contribute to the Mg(2+) site.

This sequence belongs to the TRAFAC class TrmE-Era-EngA-EngB-Septin-like GTPase superfamily. EngB GTPase family. Requires Mg(2+) as cofactor.

Functionally, necessary for normal cell division and for the maintenance of normal septation. The chain is Probable GTP-binding protein EngB from Mycoplasmopsis synoviae (strain 53) (Mycoplasma synoviae).